The chain runs to 196 residues: MEKFVTHTGVGVPLRVSNVDTDQIIPARYLKSVKRTGFADGLFSNWRSDENFILNQEPFKEGSVLFAGPDFGTGSSREHAVWALAEYGFKAVFSSRFADIFRGNSGKAGLLTGLMEQEDIELIWKQLESGETETTVDLEARTVTVGGNSYTFEIDDYTRWRLMEGLDDIGLTLRNEGDIEAFESTRPGFKPRVVAS.

This sequence belongs to the LeuD family. LeuD type 1 subfamily. Heterodimer of LeuC and LeuD.

The enzyme catalyses (2R,3S)-3-isopropylmalate = (2S)-2-isopropylmalate. The protein operates within amino-acid biosynthesis; L-leucine biosynthesis; L-leucine from 3-methyl-2-oxobutanoate: step 2/4. Functionally, catalyzes the isomerization between 2-isopropylmalate and 3-isopropylmalate, via the formation of 2-isopropylmaleate. The protein is 3-isopropylmalate dehydratase small subunit of Corynebacterium aurimucosum (strain ATCC 700975 / DSM 44827 / CIP 107346 / CN-1) (Corynebacterium nigricans).